The following is a 338-amino-acid chain: Ketol-acid reductoisomerase (NADP(+)) (338 aa).

Residues 1–181 (MRVFYDKDCD…GGGRTGIIET (181 aa)) form the KARI N-terminal Rossmann domain. NADP(+) is bound by residues 24–27 (YGSQ), Arg47, Ser50, Thr52, and 82–85 (DEFQ). His107 is an active-site residue. Residue Gly133 participates in NADP(+) binding. The KARI C-terminal knotted domain maps to 182-327 (TFKDETETDL…EKLRAMMPWI (146 aa)). Asp190, Glu194, Glu226, and Glu230 together coordinate Mg(2+). Residue Ser251 participates in substrate binding.

It belongs to the ketol-acid reductoisomerase family. It depends on Mg(2+) as a cofactor.

It carries out the reaction (2R)-2,3-dihydroxy-3-methylbutanoate + NADP(+) = (2S)-2-acetolactate + NADPH + H(+). It catalyses the reaction (2R,3R)-2,3-dihydroxy-3-methylpentanoate + NADP(+) = (S)-2-ethyl-2-hydroxy-3-oxobutanoate + NADPH + H(+). The protein operates within amino-acid biosynthesis; L-isoleucine biosynthesis; L-isoleucine from 2-oxobutanoate: step 2/4. Its pathway is amino-acid biosynthesis; L-valine biosynthesis; L-valine from pyruvate: step 2/4. Functionally, involved in the biosynthesis of branched-chain amino acids (BCAA). Catalyzes an alkyl-migration followed by a ketol-acid reduction of (S)-2-acetolactate (S2AL) to yield (R)-2,3-dihydroxy-isovalerate. In the isomerase reaction, S2AL is rearranged via a Mg-dependent methyl migration to produce 3-hydroxy-3-methyl-2-ketobutyrate (HMKB). In the reductase reaction, this 2-ketoacid undergoes a metal-dependent reduction by NADPH to yield (R)-2,3-dihydroxy-isovalerate. The protein is Ketol-acid reductoisomerase (NADP(+)) of Pseudomonas aeruginosa (strain LESB58).